Consider the following 121-residue polypeptide: Apoptin (121 aa).

2 disordered regions span residues 1 to 28 (MNAL…LETP) and 57 to 121 (LRSA…CIRL). The span at 58 to 70 (RSATADNSESTGF) shows a compositional bias: polar residues. Positions 88–102 (RSCDPSEYRVSELKE) are enriched in basic and acidic residues.

It belongs to the gyrovirus apoptin family.

It localises to the host nucleus. In terms of biological role, may act as transcriptional regulator. Induces apoptosis in infected cells. Element of infectious replication cycle. This chain is Apoptin (VP3), found in Gallus gallus (Chicken).